The chain runs to 63 residues: Venom peptide 2b (63 aa).

Residues 1–22 (MRGTSFILFAVVVILGFLHGNA) form the signal peptide. 5 AXPX repeats span residues 22–25 (AEPL), 26–29 (ANPE), 32–35 (ANPD), 38–41 (ANPD), and 44–47 (ANPE). The propeptide occupies 23-48 (EPLANPEPSANPDPLANPDPLANPEA). L62 is subject to Leucine amide.

This sequence belongs to the MCD family. Mastoparan subfamily. Expressed by the venom gland.

It localises to the secreted. It is found in the target cell membrane. Antimicrobial peptide with strong and moderate activity against the fungi B.cinerea (MIC=5 uM) and C.albicans (MIC=100 uM), the Gram-negative bacterium E.coli (MIC=200 uM) and the Gram-positive bacterium S.aureus (MIC=25 uM). Shows cytolytic activity against insect cell lines. Has potent hemolytic activity against human erythrocytes (EC(50)=64 uM). In vivo, peptide injection in the vicinity of the head and thorax of lepidopteran larvae induces feeding disorder followed by death due to starvation. In Eumenes pomiformis (Potter wasp), this protein is Venom peptide 2b.